We begin with the raw amino-acid sequence, 793 residues long: Neurobeachin (793 aa).

Disordered regions lie at residues 68–92 and 685–793; these read ENIK…TGAK and RETA…EILK. 4 stretches are compositionally biased toward polar residues: residues 77–90, 689–710, 750–762, and 782–793; these read NVST…QTTG, RSGS…STET, NILN…TSTG, and ESLTESPSEILK.

The protein belongs to the WD repeat neurobeachin family. In terms of assembly, interacts with RII subunit of PKA. In terms of tissue distribution, forebrain and cerebellum.

The protein resides in the cytoplasm. It is found in the membrane. In terms of biological role, binds to type II regulatory subunits of protein kinase A and anchors/targets them to the membrane. May anchor the kinase to cytoskeletal and/or organelle-associated proteins. In Gallus gallus (Chicken), this protein is Neurobeachin (NBEA).